The following is a 78-amino-acid chain: Cytochrome c oxidase subunit 8, mitochondrial (78 aa).

The transit peptide at 1-27 (MLCQQMIRTTAKRSSNIMTRPIIMKRS) directs the protein to the mitochondrion. Residues 28 to 51 (VHFKDGVYENIPFKVKGRKTPYAL) lie on the Mitochondrial matrix side of the membrane. Residues 52–73 (SHFGFFAIGFAVPFVACYVQLK) traverse the membrane as a helical segment. Residue Lys-74 is a topological domain, mitochondrial intermembrane. A propeptide spanning residues 75–78 (SGAF) is cleaved from the precursor.

The protein belongs to the cytochrome c oxidase VIIc family. As to quaternary structure, component of the cytochrome c oxidase (complex IV, CIV), a multisubunit enzyme composed of 12 subunits. The complex is composed of a catalytic core of 3 subunits COX1, COX2 and COX3, encoded in the mitochondrial DNA, and 9 supernumerary subunits COX4, COX5A (or COX5B), COX6, COX7, COX8, COX9, COX12, COX13 and COX26, which are encoded in the nuclear genome. The complex exists as a monomer or a dimer and forms supercomplexes (SCs) in the inner mitochondrial membrane with a dimer of ubiquinol-cytochrome c oxidoreductase (cytochrome b-c1 complex, complex III, CIII), resulting in 2 different assemblies (supercomplexes III(2)IV and III(2)IV(2)).

Its subcellular location is the mitochondrion inner membrane. It functions in the pathway energy metabolism; oxidative phosphorylation. Its function is as follows. Component of the cytochrome c oxidase, the last enzyme in the mitochondrial electron transport chain which drives oxidative phosphorylation. The respiratory chain contains 3 multisubunit complexes succinate dehydrogenase (complex II, CII), ubiquinol-cytochrome c oxidoreductase (cytochrome b-c1 complex, complex III, CIII) and cytochrome c oxidase (complex IV, CIV), that cooperate to transfer electrons derived from NADH and succinate to molecular oxygen, creating an electrochemical gradient over the inner membrane that drives transmembrane transport and the ATP synthase. Cytochrome c oxidase is the component of the respiratory chain that catalyzes the reduction of oxygen to water. Electrons originating from reduced cytochrome c in the intermembrane space (IMS) are transferred via the dinuclear copper A center (CU(A)) of COX2 and heme A of COX1 to the active site in COX1, a binuclear center (BNC) formed by heme A3 and copper B (CU(B)). The BNC reduces molecular oxygen to 2 water molecules using 4 electrons from cytochrome c in the IMS and 4 protons from the mitochondrial matrix. The sequence is that of Cytochrome c oxidase subunit 8, mitochondrial (COX8) from Saccharomyces cerevisiae (strain ATCC 204508 / S288c) (Baker's yeast).